The chain runs to 205 residues: Peptidyl-tRNA hydrolase (205 aa).

A tRNA-binding site is contributed by Tyr14. The active-site Proton acceptor is His19. Residues Tyr68, Asn70, and Asn116 each contribute to the tRNA site.

It belongs to the PTH family. As to quaternary structure, monomer.

The protein localises to the cytoplasm. It carries out the reaction an N-acyl-L-alpha-aminoacyl-tRNA + H2O = an N-acyl-L-amino acid + a tRNA + H(+). Functionally, hydrolyzes ribosome-free peptidyl-tRNAs (with 1 or more amino acids incorporated), which drop off the ribosome during protein synthesis, or as a result of ribosome stalling. Its function is as follows. Catalyzes the release of premature peptidyl moieties from peptidyl-tRNA molecules trapped in stalled 50S ribosomal subunits, and thus maintains levels of free tRNAs and 50S ribosomes. The sequence is that of Peptidyl-tRNA hydrolase from Caulobacter vibrioides (strain ATCC 19089 / CIP 103742 / CB 15) (Caulobacter crescentus).